A 188-amino-acid chain; its full sequence is uncharacterized protein (188 aa).

Residues 121-142 form a disordered region; the sequence is ADTLSRKNKRSSDQKRNGQHFE. Residues 130–142 are compositionally biased toward basic and acidic residues; the sequence is RSSDQKRNGQHFE.

It belongs to the chlamydial CPn_0422/CT_273/TC_0545 family.

This is an uncharacterized protein from Chlamydia trachomatis serovar D (strain ATCC VR-885 / DSM 19411 / UW-3/Cx).